The following is a 389-amino-acid chain: Putative teichuronic acid biosynthesis glycosyltransferase TuaC (389 aa).

The protein belongs to the glycosyltransferase group 1 family. Glycosyltransferase 4 subfamily.

The protein operates within cell wall biogenesis; teichuronic acid biosynthesis. This is Putative teichuronic acid biosynthesis glycosyltransferase TuaC (tuaC) from Bacillus subtilis (strain 168).